Here is a 555-residue protein sequence, read N- to C-terminus: MTHLSDLDIANQSTLQPIKDIAASVGISEDALEPYGHYKAKIDINKITPRENKGKVVLVTAMSPTPAGEGKSTVTVGLADAFHELNKNVMVALREPALGPTFGIKGGATGGGYAQVLPMEDINLHFNGDFHAITTANNALSAFIDNHIHQGNELGIDQRRIEWKRVLDMNDRALRHVNVGLGGPTNGVPREDGFNITVASEIMAILCLSRSIKDLKDKISRITIGYTRDRKPVTVADLKVQGALAMILKDAIKPNLVQSIEGTPALVHGGPFANIAHGCNSILATETARDLADIVVTEAGFGSDLGAEKFMDIKAREAGFDPAAVVVVATIRALKMHGGVAKDNLKEENVEAVKAGIVNLERHVNNIKKFGVEPVVAINAFIHDTDAEVEYVKSWAKENNVRIALTEVWEKGGKGGVDLANEVLEVIDQPNSFKPLYELELPLEQKIEKIVTEIYGGSKVTFSSKAQKQLKQFKENGWDNYPVCMAKTQYSFSDDQTLLGAPSGFEITIRELEAKTGAGFIVALTGAIMTMPGLPKKPAALNMDVTDDGHAIGLF.

65–72 contacts ATP; the sequence is TPAGEGKS.

This sequence belongs to the formate--tetrahydrofolate ligase family.

The enzyme catalyses (6S)-5,6,7,8-tetrahydrofolate + formate + ATP = (6R)-10-formyltetrahydrofolate + ADP + phosphate. Its pathway is one-carbon metabolism; tetrahydrofolate interconversion. The sequence is that of Formate--tetrahydrofolate ligase from Staphylococcus aureus (strain MRSA252).